Consider the following 268-residue polypeptide: Indole-3-glycerol phosphate synthase (268 aa).

This sequence belongs to the TrpC family.

The catalysed reaction is 1-(2-carboxyphenylamino)-1-deoxy-D-ribulose 5-phosphate + H(+) = (1S,2R)-1-C-(indol-3-yl)glycerol 3-phosphate + CO2 + H2O. The protein operates within amino-acid biosynthesis; L-tryptophan biosynthesis; L-tryptophan from chorismate: step 4/5. The sequence is that of Indole-3-glycerol phosphate synthase from Lachnospira eligens (strain ATCC 27750 / DSM 3376 / VPI C15-48 / C15-B4) (Eubacterium eligens).